A 179-amino-acid polypeptide reads, in one-letter code: Endoribonuclease YbeY (179 aa).

Zn(2+)-binding residues include H148, H152, and H158.

It belongs to the endoribonuclease YbeY family. Zn(2+) serves as cofactor.

The protein localises to the cytoplasm. In terms of biological role, single strand-specific metallo-endoribonuclease involved in late-stage 70S ribosome quality control and in maturation of the 3' terminus of the 16S rRNA. This Prochlorococcus marinus (strain AS9601) protein is Endoribonuclease YbeY.